We begin with the raw amino-acid sequence, 66 residues long: Putative inactive (E)-beta-ocimene synthase, chloroplastic (66 aa).

Residues Met-1–Pro-25 constitute a chloroplast transit peptide.

The protein belongs to the terpene synthase family. Tpsb subfamily. Expressed exclusively in flowers.

It is found in the plastid. The protein resides in the chloroplast. In Arabidopsis thaliana (Mouse-ear cress), this protein is Putative inactive (E)-beta-ocimene synthase, chloroplastic (TPS02).